The primary structure comprises 444 residues: 23S rRNA (uracil(1939)-C(5))-methyltransferase RlmD (444 aa).

The region spanning 5 to 67 (RSRIDRTPFQ…RHFDEARTVE (63 aa)) is the TRAM domain. The [4Fe-4S] cluster site is built by Cys-80, Cys-86, Cys-89, and Cys-168. Positions 276, 305, 310, 326, 353, and 374 each coordinate S-adenosyl-L-methionine. Cys-400 (nucleophile) is an active-site residue.

This sequence belongs to the class I-like SAM-binding methyltransferase superfamily. RNA M5U methyltransferase family. RlmD subfamily.

It carries out the reaction uridine(1939) in 23S rRNA + S-adenosyl-L-methionine = 5-methyluridine(1939) in 23S rRNA + S-adenosyl-L-homocysteine + H(+). Functionally, catalyzes the formation of 5-methyl-uridine at position 1939 (m5U1939) in 23S rRNA. This is 23S rRNA (uracil(1939)-C(5))-methyltransferase RlmD from Stenotrophomonas maltophilia (strain R551-3).